We begin with the raw amino-acid sequence, 228 residues long: Eukaryotic translation initiation factor 4E-1 (228 aa).

EIF4G-binding regions lie at residues 53–56 and 63–99; these read HLLE and FDTPAAKSKQDDWGSSMRPIYTFSTVEEFWSIYNNIH. Residues 71-76, lysine 103, and 121-122 each bind mRNA; these read KQDDWG and WE. Cysteine 126 and cysteine 164 form a disulfide bridge. Positions 147–156 are EIF4G-binding; sequence YTLLAMIGEQ. Residues 171 to 176 and 216 to 220 each bind mRNA; these read RGRAEK and RKLDR.

The protein belongs to the eukaryotic initiation factor 4E family. As to quaternary structure, EIF4F is a multi-subunit complex, the composition of which varies with external and internal environmental conditions. It is composed of at least EIF4A, EIF4E and EIF4G. EIF4E is also known to interact with other partners. In higher plants two isoforms of EIF4F have been identified, named isoform EIF4F and isoform EIF(iso)4F. Isoform EIF4F has subunits p220 and p26, whereas isoform EIF(iso)4F has subunits p82 and p28. (Microbial infection) Interacts with potyvirus viral genome-linked protein (VPg); this interaction is possible in susceptible hosts but impaired in resistant plants. In terms of processing, according to the redox status, the Cys-126-Cys-164 disulfide bridge may have a role in regulating protein function by affecting its ability to bind capped mRNA.

It localises to the nucleus. Its subcellular location is the cytoplasm. Its function is as follows. Component of the protein complex eIF4F, which is involved in the recognition of the mRNA cap, ATP-dependent unwinding of 5'-terminal secondary structure and recruitment of mRNA to the ribosome. Recognizes and binds the 7-methylguanosine-containing mRNA cap during an early step in the initiation of protein synthesis and facilitates ribosome binding by inducing the unwinding of the mRNAs secondary structures. Key component of recessive resistance to potyviruses. (Microbial infection) Susceptibility host factor required for viral infection by recruiting viral RNAs to the host ribosomal complex via an interaction with viral genome-linked protein (VPg). Also seems to be involved in virus movement from cell-to-cell. In Pisum sativum (Garden pea), this protein is Eukaryotic translation initiation factor 4E-1.